We begin with the raw amino-acid sequence, 409 residues long: Palmitoyltransferase ZDHHC23 (409 aa).

Topologically, residues methionine 1 to lysine 87 are cytoplasmic. A helical transmembrane segment spans residues valine 88–alanine 106. Residues serine 107 to histidine 109 are Lumenal-facing. The chain crosses the membrane as a helical span at residues phenylalanine 110–histidine 132. At arginine 133–glutamate 136 the chain is on the cytoplasmic side. A helical membrane pass occupies residues glutamine 137–leucine 157. Over glutamine 158–arginine 165 the chain is Lumenal. A helical membrane pass occupies residues valine 166–histidine 186. The Cytoplasmic portion of the chain corresponds to arginine 187–glutamine 302. The tract at residues arginine 215–lysine 255 is disordered. Residues aspartate 259–leucine 309 enclose the DHHC domain. Cysteine 289 acts as the S-palmitoyl cysteine intermediate in catalysis. A helical transmembrane segment spans residues alanine 303–leucine 323. At aspartate 324–serine 331 the chain is on the lumenal side. Residues valine 332–phenylalanine 352 traverse the membrane as a helical segment. A topological domain (cytoplasmic) is located at residue threonine 353. The chain crosses the membrane as a helical span at residues cysteine 354 to isoleucine 374. Residues asparagine 375–glycine 409 lie on the Lumenal side of the membrane.

This sequence belongs to the DHHC palmitoyltransferase family. In terms of assembly, interacts with NOS1.

The protein localises to the golgi apparatus membrane. The protein resides in the golgi apparatus. Its subcellular location is the trans-Golgi network membrane. It catalyses the reaction L-cysteinyl-[protein] + hexadecanoyl-CoA = S-hexadecanoyl-L-cysteinyl-[protein] + CoA. In terms of biological role, palmitoyltransferase that could catalyze the addition of palmitate onto various protein substrates and be involved in a variety of cellular processes. Palmitoyltransferase that mediates palmitoylation of KCNMA1, regulating localization of KCNMA1 to the plasma membrane. May be involved in NOS1 regulation and targeting to the synaptic membrane. The sequence is that of Palmitoyltransferase ZDHHC23 from Homo sapiens (Human).